The primary structure comprises 336 residues: Dihydroorotate dehydrogenase (quinone) (336 aa).

FMN-binding positions include 62–66 and Thr-86; that span reads AGLDK. Lys-66 serves as a coordination point for substrate. 111–115 is a binding site for substrate; sequence NRMGF. The FMN site is built by Asn-139 and Asn-172. Asn-172 contributes to the substrate binding site. Ser-175 serves as the catalytic Nucleophile. Position 177 (Asn-177) interacts with substrate. Residues Lys-217 and Thr-245 each contribute to the FMN site. 246–247 contacts substrate; sequence NT. Residues Gly-268, Gly-297, and 318–319 each bind FMN; that span reads YS.

It belongs to the dihydroorotate dehydrogenase family. Type 2 subfamily. Monomer. Requires FMN as cofactor.

It localises to the cell membrane. It carries out the reaction (S)-dihydroorotate + a quinone = orotate + a quinol. It participates in pyrimidine metabolism; UMP biosynthesis via de novo pathway; orotate from (S)-dihydroorotate (quinone route): step 1/1. In terms of biological role, catalyzes the conversion of dihydroorotate to orotate with quinone as electron acceptor. The polypeptide is Dihydroorotate dehydrogenase (quinone) (Sodalis glossinidius (strain morsitans)).